The primary structure comprises 276 residues: Putative ripening-related protein 5 (276 aa).

A signal peptide spans 1-18 (MAMIFLLAALSTTHLASS).

The protein belongs to the kiwellin family.

The protein localises to the secreted. The sequence is that of Putative ripening-related protein 5 from Oryza sativa subsp. japonica (Rice).